The chain runs to 672 residues: Synaptotagmin-like protein 4 (672 aa).

Residues 4–122 (ILDLSFLSEM…KATGDWFYDQ (119 aa)) enclose the RabBD domain. An FYVE-type zinc finger spans residues 63-105 (CARCQEGLGRLISKSNTCVGCNHLVCRECRVLESNGSWRCKVC). The interval 199–222 (SESLDSYTADSDSTSRRDSLDKSG) is disordered. Phosphoserine is present on residues Ser201, Ser204, Ser217, Ser221, and Ser274. The 123-residue stretch at 357-479 (VTGKIAFSLK…KLDKKLDHCL (123 aa)) folds into the C2 1 domain. Residue Ser489 is modified to Phosphoserine. The 127-residue stretch at 508–634 (PASKLPVGGD…ISSGEVVDWM (127 aa)) folds into the C2 2 domain.

Part of a ternary complex containing STX1A and RAB27A. Can bind both dominant negative and dominant active mutants of RAB27A. Binds STXBP1, RAB3A, RAB8A and RAB27B. Interacts with MYO5A. Detected in insulin-secreting cell lines.

Its subcellular location is the membrane. It is found in the cytoplasmic vesicle. It localises to the secretory vesicle membrane. In terms of biological role, modulates exocytosis of dense-core granules and secretion of hormones in the pancreas and the pituitary. Interacts with vesicles containing negatively charged phospholipids in a Ca(2+)-independent manner. The chain is Synaptotagmin-like protein 4 (Sytl4) from Rattus norvegicus (Rat).